The following is a 384-amino-acid chain: MNKSDSFYNLETIGGILLFIAAVLAIIIANSPYRIGYDYFLSINGSVSVGNLSITKPLLLWINDGLMAIYFLLIGLEIKREVNRGILSDKTNLLVPALTALAGLLFPALIFIFFNAHHPVYLKGWAIPTATDIAFTLGIVSLLGSRVPFSLKILLTAIAIFDDIAAIVIIALFYTEQLSLLSLSLALVFTLILIGLNYFKCRRISVFMLFGVALWIAVLKSGVHATLAGIVIAMTIPDEGKESMLTRLEDGLHHWVVFLILPLFAFANAGVSFVGLDASMLTHPVVLGIGLGLFLGKQLGIFLSLGYFVQFKKFLKADKVNLAQVYGIALICGVGFTMSLFIGSLAYQNYDLSLMPMVKIGVVFGSFIAGLTGFLVLKMTSLKR.

11 consecutive transmembrane segments (helical) span residues 9–29 (NLET…IIIA), 58–78 (LLLW…GLEI), 94–114 (LVPA…FIFF), 124–144 (GWAI…SLLG), 153–173 (ILLT…IALF), 179–199 (SLLS…LNYF), 204–224 (ISVF…SGVH), 256–276 (VVFL…FVGL), 285–305 (VVLG…FLSL), 325–345 (VYGI…IGSL), and 357–377 (MVKI…FLVL).

It belongs to the NhaA Na(+)/H(+) (TC 2.A.33) antiporter family.

The protein localises to the cell inner membrane. The enzyme catalyses Na(+)(in) + 2 H(+)(out) = Na(+)(out) + 2 H(+)(in). Na(+)/H(+) antiporter that extrudes sodium in exchange for external protons. The protein is Na(+)/H(+) antiporter NhaA of Legionella pneumophila (strain Lens).